The chain runs to 494 residues: Rho GTPase-activating protein 19 (494 aa).

A2 carries the N-acetylalanine modification. 2 positions are modified to phosphoserine: S7 and S31. Positions 102-308 (MSLKRKEKGV…FMIKHSQKLF (207 aa)) constitute a Rho-GAP domain. 2 disordered regions span residues 349–368 (KSQK…TQHH) and 399–421 (QSLT…ARSR). The segment covering 354–368 (NRVDSCPHQEETQHH) has biased composition (basic and acidic residues). A compositionally biased stretch (polar residues) spans 399 to 415 (QSLTQTPGREPSTSQVQ). A phosphoserine mark is found at S422, S438, and S470. T478 carries the post-translational modification Phosphothreonine.

Strong expression in fetal heart, brain, placenta, lung, liver, skeletal muscle, kidney and pancreas. Weak expression in adult pancreas, spleen, thymus, and ovary.

Its subcellular location is the nucleus. GTPase activator for the Rho-type GTPases by converting them to an inactive GDP-bound state. In Homo sapiens (Human), this protein is Rho GTPase-activating protein 19 (ARHGAP19).